A 121-amino-acid polypeptide reads, in one-letter code: Glycine cleavage system H protein (121 aa).

One can recognise a Lipoyl-binding domain in the interval 16–98 (VATIGITAHA…EAGGWFAKVR (83 aa)). At Lys-57 the chain carries N6-lipoyllysine.

Belongs to the GcvH family. The glycine cleavage system is composed of four proteins: P, T, L and H. (R)-lipoate is required as a cofactor.

The glycine cleavage system catalyzes the degradation of glycine. The H protein shuttles the methylamine group of glycine from the P protein to the T protein. This is Glycine cleavage system H protein from Phenylobacterium zucineum (strain HLK1).